Here is a 294-residue protein sequence, read N- to C-terminus: Phosphatidylserine decarboxylase proenzyme (294 aa).

Active-site charge relay system; for autoendoproteolytic cleavage activity residues include Asp113, His169, and Ser256. Ser256 acts as the Schiff-base intermediate with substrate; via pyruvic acid; for decarboxylase activity in catalysis. Ser256 is modified (pyruvic acid (Ser); by autocatalysis).

Belongs to the phosphatidylserine decarboxylase family. PSD-B subfamily. Prokaryotic type II sub-subfamily. In terms of assembly, heterodimer of a large membrane-associated beta subunit and a small pyruvoyl-containing alpha subunit. Pyruvate is required as a cofactor. Is synthesized initially as an inactive proenzyme. Formation of the active enzyme involves a self-maturation process in which the active site pyruvoyl group is generated from an internal serine residue via an autocatalytic post-translational modification. Two non-identical subunits are generated from the proenzyme in this reaction, and the pyruvate is formed at the N-terminus of the alpha chain, which is derived from the carboxyl end of the proenzyme. The autoendoproteolytic cleavage occurs by a canonical serine protease mechanism, in which the side chain hydroxyl group of the serine supplies its oxygen atom to form the C-terminus of the beta chain, while the remainder of the serine residue undergoes an oxidative deamination to produce ammonia and the pyruvoyl prosthetic group on the alpha chain. During this reaction, the Ser that is part of the protease active site of the proenzyme becomes the pyruvoyl prosthetic group, which constitutes an essential element of the active site of the mature decarboxylase.

It is found in the cell membrane. The catalysed reaction is a 1,2-diacyl-sn-glycero-3-phospho-L-serine + H(+) = a 1,2-diacyl-sn-glycero-3-phosphoethanolamine + CO2. It functions in the pathway phospholipid metabolism; phosphatidylethanolamine biosynthesis; phosphatidylethanolamine from CDP-diacylglycerol: step 2/2. Catalyzes the formation of phosphatidylethanolamine (PtdEtn) from phosphatidylserine (PtdSer). This Clostridium perfringens (strain ATCC 13124 / DSM 756 / JCM 1290 / NCIMB 6125 / NCTC 8237 / Type A) protein is Phosphatidylserine decarboxylase proenzyme.